The primary structure comprises 183 residues: Adenine phosphoribosyltransferase (183 aa).

The protein belongs to the purine/pyrimidine phosphoribosyltransferase family. As to quaternary structure, homodimer.

It is found in the cytoplasm. It carries out the reaction AMP + diphosphate = 5-phospho-alpha-D-ribose 1-diphosphate + adenine. It functions in the pathway purine metabolism; AMP biosynthesis via salvage pathway; AMP from adenine: step 1/1. In terms of biological role, catalyzes a salvage reaction resulting in the formation of AMP, that is energically less costly than de novo synthesis. The sequence is that of Adenine phosphoribosyltransferase from Salmonella gallinarum (strain 287/91 / NCTC 13346).